Here is a 450-residue protein sequence, read N- to C-terminus: uncharacterized protein (450 aa).

Lys283 is subject to N6-(pyridoxal phosphate)lysine.

Belongs to the class-III pyridoxal-phosphate-dependent aminotransferase family. Pyridoxal 5'-phosphate serves as cofactor.

Its function is as follows. Essential for glycerol catabolism. This is an uncharacterized protein from Bacillus subtilis (strain 168).